A 559-amino-acid polypeptide reads, in one-letter code: 5'-AMP-activated protein kinase catalytic subunit alpha-1 (559 aa).

The Protein kinase domain maps to 27-279; that stretch reads YILGDTLGVG…IKDIREHEWF (253 aa). Threonine 32 bears the Phosphothreonine mark. ATP contacts are provided by residues 33–41 and lysine 56; that span reads LGVGTFGKV. Residue aspartate 150 is the Proton acceptor of the active site. Threonine 183 is subject to Phosphothreonine; by LKB1 and CaMKK2. Residues 302–381 are AIS; it reads EALKEVCEKF…PERVPFLVAE (80 aa). The residue at position 355 (threonine 355) is a Phosphothreonine. A Phosphoserine modification is found at serine 356. The residue at position 360 (serine 360) is a Phosphoserine; by ULK1. Threonine 368 is modified (phosphothreonine; by ULK1). Position 382 is a phosphothreonine (threonine 382). Serine 397 bears the Phosphoserine; by ULK1 mark. A phosphoserine mark is found at serine 467 and serine 486. Over residues 485 to 505 the composition is skewed to polar residues; it reads KSGTATPQRSGSISNYRSCQR. The tract at residues 485-536 is disordered; sequence KSGTATPQRSGSISNYRSCQRSDSDAEAQGKPSDVSLTSSVTSLDSSPVDVA. A Phosphothreonine; by ULK1 modification is found at threonine 488. Position 490 is a phosphothreonine (threonine 490). 4 positions are modified to phosphoserine: serine 496, serine 508, serine 524, and serine 527. Positions 516 to 535 are enriched in low complexity; sequence PSDVSLTSSVTSLDSSPVDV.

This sequence belongs to the protein kinase superfamily. CAMK Ser/Thr protein kinase family. SNF1 subfamily. AMPK is a heterotrimer of an alpha catalytic subunit (PRKAA1 or PRKAA2), a beta (PRKAB1 or PRKAB2) and a gamma non-catalytic subunits (PRKAG1, PRKAG2 or PRKAG3). Interacts with FNIP1 and FNIP2. Requires Mg(2+) as cofactor. In terms of processing, phosphorylated at Thr-183 by STK11/LKB1 in complex with STE20-related adapter-alpha (STRADA) pseudo kinase and CAB39. Also phosphorylated at Thr-183 by CAMKK2; triggered by a rise in intracellular calcium ions, without detectable changes in the AMP/ATP ratio. CAMKK1 can also phosphorylate Thr-183, but at a much lower level. Dephosphorylated by protein phosphatase 2A and 2C (PP2A and PP2C). Phosphorylated by ULK1 and ULK2; leading to negatively regulate AMPK activity and suggesting the existence of a regulatory feedback loop between ULK1, ULK2 and AMPK. Dephosphorylated by PPM1A and PPM1B. Ubiquitinated. Post-translationally, glycosylated; O-GlcNAcylated by OGT, promoting the AMP-activated protein kinase (AMPK) activity.

It is found in the cytoplasm. The protein resides in the nucleus. It carries out the reaction L-seryl-[protein] + ATP = O-phospho-L-seryl-[protein] + ADP + H(+). The enzyme catalyses L-threonyl-[protein] + ATP = O-phospho-L-threonyl-[protein] + ADP + H(+). The catalysed reaction is L-seryl-[acetyl-CoA carboxylase] + ATP = O-phospho-L-seryl-[acetyl-CoA carboxylase] + ADP + H(+). It catalyses the reaction L-seryl-[3-hydroxy-3-methylglutaryl-coenzyme A reductase] + ATP = O-phospho-L-seryl-[3-hydroxy-3-methylglutaryl-coenzyme A reductase] + ADP + H(+). It carries out the reaction L-seryl-[tau protein] + ATP = O-phospho-L-seryl-[tau protein] + ADP + H(+). The enzyme catalyses L-threonyl-[tau protein] + ATP = O-phospho-L-threonyl-[tau protein] + ADP + H(+). With respect to regulation, activated by phosphorylation on Thr-183. Binding of AMP to non-catalytic gamma subunit (PRKAG1, PRKAG2 or PRKAG3) results in allosteric activation, inducing phosphorylation on Thr-183. AMP-binding to gamma subunit also sustains activity by preventing dephosphorylation of Thr-183. ADP also stimulates Thr-183 phosphorylation, without stimulating already phosphorylated AMPK. ATP promotes dephosphorylation of Thr-183, rendering the enzyme inactive. Under physiological conditions AMPK mainly exists in its inactive form in complex with ATP, which is much more abundant than AMP. Selectively inhibited by compound C (6-[4-(2-Piperidin-1-yl-ethoxy)-phenyl)]-3-pyridin-4-yl-pyyrazolo[1,5-a] pyrimidine. Activated by resveratrol, a natural polyphenol present in red wine, and S17834, a synthetic polyphenol. Its function is as follows. Catalytic subunit of AMP-activated protein kinase (AMPK), an energy sensor protein kinase that plays a key role in regulating cellular energy metabolism. In response to reduction of intracellular ATP levels, AMPK activates energy-producing pathways and inhibits energy-consuming processes: inhibits protein, carbohydrate and lipid biosynthesis, as well as cell growth and proliferation. AMPK acts via direct phosphorylation of metabolic enzymes, and by longer-term effects via phosphorylation of transcription regulators. Regulates lipid synthesis by phosphorylating and inactivating lipid metabolic enzymes such as ACACA, ACACB, GYS1, HMGCR and LIPE; regulates fatty acid and cholesterol synthesis by phosphorylating acetyl-CoA carboxylase (ACACA and ACACB) and hormone-sensitive lipase (LIPE) enzymes, respectively. Promotes lipolysis of lipid droplets by mediating phosphorylation of isoform 1 of CHKA (CHKalpha2). Regulates insulin-signaling and glycolysis by phosphorylating IRS1, PFKFB2 and PFKFB3. AMPK stimulates glucose uptake in muscle by increasing the translocation of the glucose transporter SLC2A4/GLUT4 to the plasma membrane, possibly by mediating phosphorylation of TBC1D4/AS160. Regulates transcription and chromatin structure by phosphorylating transcription regulators involved in energy metabolism such as CRTC2/TORC2, FOXO3, histone H2B, HDAC5, MEF2C, MLXIPL/ChREBP, EP300, HNF4A, p53/TP53, SREBF1, SREBF2 and PPARGC1A. Acts as a key regulator of glucose homeostasis in liver by phosphorylating CRTC2/TORC2, leading to CRTC2/TORC2 sequestration in the cytoplasm. In response to stress, phosphorylates 'Ser-36' of histone H2B (H2BS36ph), leading to promote transcription. Acts as a key regulator of cell growth and proliferation by phosphorylating FNIP1, TSC2, RPTOR, WDR24 and ATG1/ULK1: in response to nutrient limitation, negatively regulates the mTORC1 complex by phosphorylating RPTOR component of the mTORC1 complex and by phosphorylating and activating TSC2. Also phosphorylates and inhibits GATOR2 subunit WDR24 in response to nutrient limitation, leading to suppress glucose-mediated mTORC1 activation. In response to energetic stress, phosphorylates FNIP1, inactivating the non-canonical mTORC1 signaling, thereby promoting nuclear translocation of TFEB and TFE3, and inducing transcription of lysosomal or autophagy genes. In response to nutrient limitation, promotes autophagy by phosphorylating and activating ATG1/ULK1. In that process, it also activates WDR45/WIPI4. Phosphorylates CASP6, thereby preventing its autoprocessing and subsequent activation. In response to nutrient limitation, phosphorylates transcription factor FOXO3 promoting FOXO3 mitochondrial import. Also acts as a regulator of cellular polarity by remodeling the actin cytoskeleton; probably by indirectly activating myosin. AMPK also acts as a regulator of circadian rhythm by mediating phosphorylation of CRY1, leading to destabilize it. May regulate the Wnt signaling pathway by phosphorylating CTNNB1, leading to stabilize it. Also has tau-protein kinase activity: in response to amyloid beta A4 protein (APP) exposure, activated by CAMKK2, leading to phosphorylation of MAPT/TAU; however the relevance of such data remains unclear in vivo. Also phosphorylates CFTR, EEF2K, KLC1, NOS3 and SLC12A1. Regulates hepatic lipogenesis. Activated via SIRT3, represses sterol regulatory element-binding protein (SREBP) transcriptional activities and ATP-consuming lipogenesis to restore cellular energy balance. Upon stress, regulates mitochondrial fragmentation through phosphorylation of MTFR1L. In Mus musculus (Mouse), this protein is 5'-AMP-activated protein kinase catalytic subunit alpha-1 (Prkaa1).